The following is a 741-amino-acid chain: Interleukin-17 receptor D (741 aa).

The signal sequence occupies residues 1-26 (MAPGRELGAFLLALLAFCGGRRLAEA). Over 27-301 (AGGPGGRRGA…VHSPWAGPIR (275 aa)) the chain is Extracellular. N-linked (GlcNAc...) asparagine glycosylation is found at Asn57, Asn82, Asn173, Asn208, and Asn279. The chain crosses the membrane as a helical span at residues 302 to 322 (AIAITVPLVVISAFATLFTVM). Residues 323 to 741 (CRKKQQENIY…TDELQAIAPL (419 aa)) are Cytoplasmic-facing. The SEFIR domain maps to 357–510 (RPKVFICYSS…LMDNLPQLYS (154 aa)). Residues 688–703 (TETSSITGSVSSSSGL) show a composition bias toward low complexity. The interval 688 to 708 (TETSSITGSVSSSSGLGEEEP) is disordered.

It is found in the membrane. Feedback inhibitor of fibroblast growth factor mediated Ras-MAPK signaling and ERK activation. May inhibit FGF-induced FGFR1 tyrosine phosphorylation. Inhibits TGFB-induced epithelial-to-mesenchymal transition in lens epithelial cells. This is Interleukin-17 receptor D (IL17RD) from Gallus gallus (Chicken).